We begin with the raw amino-acid sequence, 345 residues long: Solute carrier family 25 member 43 (345 aa).

Solcar repeat units lie at residues 11–100 (TSSQ…IDEL), 104–195 (SQWR…QERH), and 199–297 (TSLQ…LYRN). The next 6 membrane-spanning stretches (helical) occupy residues 16-36 (LMCV…LEVV), 67-87 (FWKG…IHLA), 109-129 (IVAG…LEVV), 165-185 (GFSL…AVYI), 204-224 (FING…FETV), and 261-281 (VMAL…YFGL).

Belongs to the mitochondrial carrier (TC 2.A.29) family.

The protein resides in the mitochondrion inner membrane. The chain is Solute carrier family 25 member 43 (slc25a43) from Danio rerio (Zebrafish).